The following is a 211-amino-acid chain: MGQKVNPVGFRLGVIRTWDSRWYAEADYSKLLHEDLKLRNFLKKRLYNSGVSKIEIERAANKAKINIYTARPGLIIGKKGAEVETLKKELAKLTDKEIYLNIQEVRKPELDAQLVAENVALQLERRVAFRRAMKKSVTSSLKFGAKGIRITCSGRLGGAEMSRTEWYREGRVPLHTLRADIDYGFAEAKTTYGIIGVKVLIFKGEVLPGQK.

Residues 38 to 106 (LRNFLKKRLY…EIYLNIQEVR (69 aa)) form the KH type-2 domain.

The protein belongs to the universal ribosomal protein uS3 family. As to quaternary structure, part of the 30S ribosomal subunit. Forms a tight complex with proteins S10 and S14.

Binds the lower part of the 30S subunit head. Binds mRNA in the 70S ribosome, positioning it for translation. The protein is Small ribosomal subunit protein uS3 of Geobacter sulfurreducens (strain ATCC 51573 / DSM 12127 / PCA).